The following is a 127-amino-acid chain: MQALLLVGAGGAAGAVARYLLGVQALRWLGPGWPYGTFAANILGGFLMGLLAGGLAHRGGAGQETWRLLLGVGALGGFTTFSAYSLEVALMIERRAYGQAFAYSLGSVALAVAALFAGLLLARRVFA.

4 consecutive transmembrane segments (helical) span residues 3 to 23 (ALLL…LLGV), 36 to 56 (GTFA…GGLA), 72 to 92 (VGAL…ALMI), and 101 to 121 (FAYS…GLLL). The Na(+) site is built by Gly-76 and Thr-79.

The protein belongs to the fluoride channel Fluc/FEX (TC 1.A.43) family.

Its subcellular location is the cell inner membrane. The catalysed reaction is fluoride(in) = fluoride(out). With respect to regulation, na(+) is not transported, but it plays an essential structural role and its presence is essential for fluoride channel function. In terms of biological role, fluoride-specific ion channel. Important for reducing fluoride concentration in the cell, thus reducing its toxicity. In Phenylobacterium zucineum (strain HLK1), this protein is Fluoride-specific ion channel FluC.